The sequence spans 338 residues: Holliday junction branch migration complex subunit RuvB (338 aa).

Residues 1–182 form a large ATPase domain (RuvB-L) region; sequence MDDRMVDQSQ…FGVHLRLEYY (182 aa). ATP contacts are provided by residues Leu21, Arg22, Gly63, Lys66, Thr67, Thr68, 129 to 131, Arg172, Tyr182, and Arg219; that span reads EDF. Thr67 contributes to the Mg(2+) binding site. A small ATPAse domain (RuvB-S) region spans residues 183–253; the sequence is KESELKDIII…TTKRALQLLQ (71 aa). The segment at 256-338 is head domain (RuvB-H); that stretch reads DYGLDYIDHK…KNGKRDNFEY (83 aa). 3 residues coordinate DNA: Arg292, Arg311, and Arg316.

The protein belongs to the RuvB family. As to quaternary structure, homohexamer. Forms an RuvA(8)-RuvB(12)-Holliday junction (HJ) complex. HJ DNA is sandwiched between 2 RuvA tetramers; dsDNA enters through RuvA and exits via RuvB. An RuvB hexamer assembles on each DNA strand where it exits the tetramer. Each RuvB hexamer is contacted by two RuvA subunits (via domain III) on 2 adjacent RuvB subunits; this complex drives branch migration. In the full resolvosome a probable DNA-RuvA(4)-RuvB(12)-RuvC(2) complex forms which resolves the HJ.

It localises to the cytoplasm. The catalysed reaction is ATP + H2O = ADP + phosphate + H(+). In terms of biological role, the RuvA-RuvB-RuvC complex processes Holliday junction (HJ) DNA during genetic recombination and DNA repair, while the RuvA-RuvB complex plays an important role in the rescue of blocked DNA replication forks via replication fork reversal (RFR). RuvA specifically binds to HJ cruciform DNA, conferring on it an open structure. The RuvB hexamer acts as an ATP-dependent pump, pulling dsDNA into and through the RuvAB complex. RuvB forms 2 homohexamers on either side of HJ DNA bound by 1 or 2 RuvA tetramers; 4 subunits per hexamer contact DNA at a time. Coordinated motions by a converter formed by DNA-disengaged RuvB subunits stimulates ATP hydrolysis and nucleotide exchange. Immobilization of the converter enables RuvB to convert the ATP-contained energy into a lever motion, pulling 2 nucleotides of DNA out of the RuvA tetramer per ATP hydrolyzed, thus driving DNA branch migration. The RuvB motors rotate together with the DNA substrate, which together with the progressing nucleotide cycle form the mechanistic basis for DNA recombination by continuous HJ branch migration. Branch migration allows RuvC to scan DNA until it finds its consensus sequence, where it cleaves and resolves cruciform DNA. This chain is Holliday junction branch migration complex subunit RuvB, found in Staphylococcus carnosus (strain TM300).